The following is an 874-amino-acid chain: Leucine--tRNA ligase (874 aa).

Positions 43-53 match the 'HIGH' region motif; that stretch reads PYPSGRIHIGH. Residues 630–634 carry the 'KMSKS' region motif; sequence KMSKS. K633 serves as a coordination point for ATP.

The protein belongs to the class-I aminoacyl-tRNA synthetase family.

It is found in the cytoplasm. It carries out the reaction tRNA(Leu) + L-leucine + ATP = L-leucyl-tRNA(Leu) + AMP + diphosphate. The polypeptide is Leucine--tRNA ligase (Bradyrhizobium diazoefficiens (strain JCM 10833 / BCRC 13528 / IAM 13628 / NBRC 14792 / USDA 110)).